Reading from the N-terminus, the 85-residue chain is Cell division protein ZapA (85 aa).

Residues 60–85 (AVNVVHDYLKLKEQYEKLEIQLKEKE) adopt a coiled-coil conformation.

It belongs to the ZapA family. Type 2 subfamily. As to quaternary structure, homodimer. Interacts with FtsZ.

The protein localises to the cytoplasm. Its function is as follows. Activator of cell division through the inhibition of FtsZ GTPase activity, therefore promoting FtsZ assembly into bundles of protofilaments necessary for the formation of the division Z ring. It is recruited early at mid-cell but it is not essential for cell division. The protein is Cell division protein ZapA of Bacillus pumilus (strain SAFR-032).